We begin with the raw amino-acid sequence, 199 residues long: Peroxiredoxin-1 (199 aa).

A Thioredoxin domain is found at 6–165 (AYIGKLAPDF…TLRLVQAFQF (160 aa)). Cys52 serves as the catalytic Cysteine sulfenic acid (-SOH) intermediate.

This sequence belongs to the peroxiredoxin family. AhpC/Prx1 subfamily. Homodimer; disulfide-linked, upon oxidation. 5 homodimers assemble to form a ring-like decamer. Interacts with GDPD5; forms a mixed-disulfide with GDPD5. Interacts with SESN1 and SESN2. Interacts with FAM107A. Post-translationally, the enzyme can be inactivated by further oxidation of the cysteine sulfenic acid (C(P)-SOH) to sulphinic acid (C(P)-SO2H) instead of its condensation to a disulfide bond. It can be reactivated by forming a transient disulfide bond with sulfiredoxin SRXN1, which reduces the cysteine sulfinic acid in an ATP- and Mg-dependent manner.

It is found in the cytoplasm. The enzyme catalyses a hydroperoxide + [thioredoxin]-dithiol = an alcohol + [thioredoxin]-disulfide + H2O. Functionally, thiol-specific peroxidase that catalyzes the reduction of hydrogen peroxide and organic hydroperoxides to water and alcohols, respectively. Plays a role in cell protection against oxidative stress by detoxifying peroxides and as sensor of hydrogen peroxide-mediated signaling events. Might participate in the signaling cascades of growth factors and tumor necrosis factor-alpha by regulating the intracellular concentrations of H(2)O(2). Reduces an intramolecular disulfide bond in GDPD5 that gates the ability to GDPD5 to drive postmitotic motor neuron differentiation. This Gekko japonicus (Schlegel's Japanese gecko) protein is Peroxiredoxin-1 (PRDX1).